A 567-amino-acid polypeptide reads, in one-letter code: Lactase-like protein (567 aa).

The N-terminal stretch at 1-21 (MKPVWVATLLWMLLLVPRLGA) is a signal peptide. At 23-541 (RKGSPEEASF…LLSHMQMVTE (519 aa)) the chain is on the extracellular side. 3 N-linked (GlcNAc...) asparagine glycosylation sites follow: N80, N171, and N245. Residues 542–562 (IVVPTVCSLCVLITAVLLMLL) form a helical membrane-spanning segment. Residues 563-567 (LRRQS) are Cytoplasmic-facing.

This sequence belongs to the glycosyl hydrolase 1 family. Klotho subfamily. In terms of assembly, may form dimers.

It is found in the endoplasmic reticulum membrane. In terms of biological role, plays a role in formation of the lens suture in the eye, which is important for normal optical properties of the lens. This is Lactase-like protein (LCTL) from Homo sapiens (Human).